The sequence spans 363 residues: Pyrimidine monooxygenase RutA (363 aa).

Residues 49–50 (IK), Asn-115, Glu-124, 140–141 (RY), and Ser-190 contribute to the FMN site.

It belongs to the NtaA/SnaA/DszA monooxygenase family. RutA subfamily.

It carries out the reaction uracil + FMNH2 + NADH + O2 = (Z)-3-ureidoacrylate + FMN + NAD(+) + H2O + H(+). It catalyses the reaction thymine + FMNH2 + NADH + O2 = (Z)-2-methylureidoacrylate + FMN + NAD(+) + H2O + H(+). Functionally, catalyzes the pyrimidine ring opening between N-3 and C-4 by an unusual flavin hydroperoxide-catalyzed mechanism, adding oxygen atoms in the process to yield ureidoacrylate peracid, that immediately reacts with FMN forming ureidoacrylate and FMN-N(5)-oxide. The FMN-N(5)-oxide reacts spontaneously with NADH to produce FMN. Requires the flavin reductase RutF to regenerate FMN in vivo. The sequence is that of Pyrimidine monooxygenase RutA from Enterobacter cloacae subsp. cloacae (strain ATCC 13047 / DSM 30054 / NBRC 13535 / NCTC 10005 / WDCM 00083 / NCDC 279-56).